The following is a 148-amino-acid chain: Snaclec jerdonuxin subunit beta (148 aa).

An N-terminal signal peptide occupies residues 1 to 23 (MVRFIFVSFGLLVVFLSLSGIGA). 3 disulfide bridges follow: cysteine 27–cysteine 38, cysteine 55–cysteine 144, and cysteine 121–cysteine 136. In terms of domain architecture, C-type lectin spans 34 to 145 (YDEHCYQVFQ…CSSKRYIVCK (112 aa)).

Belongs to the snaclec family. As to quaternary structure, tetramer of 4 heterodimers of alpha and beta subunits; disulfide-linked. As to expression, expressed by the venom gland.

It localises to the secreted. In terms of biological role, snaclec that strongly induces platelet aggregation, in a dose-dependent manner. The sequence is that of Snaclec jerdonuxin subunit beta from Protobothrops jerdonii (Jerdon's pitviper).